The chain runs to 374 residues: Probable inactive patatin-3-Kuras 1 (374 aa).

A signal peptide spans 1–11; that stretch reads MMLATTSSTFA. Residues 20–217 enclose the PNPLA domain; the sequence is LSIDGGGIKG…AAVDPSLLSI (198 aa). The GXGXXG motif lies at 24-29; that stretch reads GGGIKG. Residues N48 and N191 are each glycosylated (N-linked (GlcNAc...) asparagine). Catalysis depends on D204, which acts as the Proton acceptor. A glycan (N-linked (GlcNAc...) asparagine) is linked at N257.

It belongs to the patatin family. N-glycosylated. In terms of tissue distribution, tuber.

It is found in the vacuole. This chain is Probable inactive patatin-3-Kuras 1 (pat3-k1), found in Solanum tuberosum (Potato).